A 143-amino-acid chain; its full sequence is D-aminoacyl-tRNA deacylase (143 aa).

Positions 135-136 (GP) match the Gly-cisPro motif, important for rejection of L-amino acids motif.

It belongs to the DTD family. In terms of assembly, homodimer.

It is found in the cytoplasm. The catalysed reaction is glycyl-tRNA(Ala) + H2O = tRNA(Ala) + glycine + H(+). The enzyme catalyses a D-aminoacyl-tRNA + H2O = a tRNA + a D-alpha-amino acid + H(+). An aminoacyl-tRNA editing enzyme that deacylates mischarged D-aminoacyl-tRNAs. Also deacylates mischarged glycyl-tRNA(Ala), protecting cells against glycine mischarging by AlaRS. Acts via tRNA-based rather than protein-based catalysis; rejects L-amino acids rather than detecting D-amino acids in the active site. By recycling D-aminoacyl-tRNA to D-amino acids and free tRNA molecules, this enzyme counteracts the toxicity associated with the formation of D-aminoacyl-tRNA entities in vivo and helps enforce protein L-homochirality. The sequence is that of D-aminoacyl-tRNA deacylase from Mycolicibacterium paratuberculosis (strain ATCC BAA-968 / K-10) (Mycobacterium paratuberculosis).